The chain runs to 204 residues: Potassium-transporting ATPase KdpC subunit (204 aa).

The chain crosses the membrane as a helical span at residues 21-41 (AALVIFVGLSLVTGVLYPVVV).

Belongs to the KdpC family. The system is composed of three essential subunits: KdpA, KdpB and KdpC.

The protein localises to the cell inner membrane. Functionally, part of the high-affinity ATP-driven potassium transport (or Kdp) system, which catalyzes the hydrolysis of ATP coupled with the electrogenic transport of potassium into the cytoplasm. This subunit acts as a catalytic chaperone that increases the ATP-binding affinity of the ATP-hydrolyzing subunit KdpB by the formation of a transient KdpB/KdpC/ATP ternary complex. This is Potassium-transporting ATPase KdpC subunit from Ralstonia nicotianae (strain ATCC BAA-1114 / GMI1000) (Ralstonia solanacearum).